A 487-amino-acid polypeptide reads, in one-letter code: GTPase Der (487 aa).

EngA-type G domains are found at residues 5-169 (PKLA…SREI) and 178-351 (IKVA…ANSQ). GTP contacts are provided by residues 11–18 (GRPNVGKS), 58–62 (DTGGI), 121–124 (NKID), 184–191 (GRANVGKS), 231–235 (DTAGI), and 296–299 (NKWD). In terms of domain architecture, KH-like spans 352 to 439 (KRITTHQLNK…IHLKGKTKKD (88 aa)). The tract at residues 441-466 (PVSSLSLTRKQTKSTDQENNEYDELY) is disordered.

The protein belongs to the TRAFAC class TrmE-Era-EngA-EngB-Septin-like GTPase superfamily. EngA (Der) GTPase family. In terms of assembly, associates with the 50S ribosomal subunit.

GTPase that plays an essential role in the late steps of ribosome biogenesis. This is GTPase Der from Protochlamydia amoebophila (strain UWE25).